The following is a 552-amino-acid chain: uncharacterized protein (552 aa).

In terms of domain architecture, DhaL spans 8–200 (KLFADMIIQG…LLCVYEGFLK (193 aa)).

This is an uncharacterized protein from Staphylococcus epidermidis (strain ATCC 12228 / FDA PCI 1200).